A 291-amino-acid polypeptide reads, in one-letter code: ATP synthase gamma chain (291 aa).

This sequence belongs to the ATPase gamma chain family. As to quaternary structure, F-type ATPases have 2 components, CF(1) - the catalytic core - and CF(0) - the membrane proton channel. CF(1) has five subunits: alpha(3), beta(3), gamma(1), delta(1), epsilon(1). CF(0) has three main subunits: a, b and c.

It localises to the cell inner membrane. Its function is as follows. Produces ATP from ADP in the presence of a proton gradient across the membrane. The gamma chain is believed to be important in regulating ATPase activity and the flow of protons through the CF(0) complex. The protein is ATP synthase gamma chain of Ruegeria pomeroyi (strain ATCC 700808 / DSM 15171 / DSS-3) (Silicibacter pomeroyi).